The chain runs to 282 residues: Undecaprenyl-diphosphatase (282 aa).

8 consecutive transmembrane segments (helical) span residues Met1–Ile21, Gly40–Ala60, Trp89–Ile109, Val112–Val132, Leu153–Ser173, Phe196–Thr216, Leu228–Leu248, and Gly258–Gly278.

The protein belongs to the UppP family.

The protein resides in the cell inner membrane. It catalyses the reaction di-trans,octa-cis-undecaprenyl diphosphate + H2O = di-trans,octa-cis-undecaprenyl phosphate + phosphate + H(+). Catalyzes the dephosphorylation of undecaprenyl diphosphate (UPP). Confers resistance to bacitracin. The sequence is that of Undecaprenyl-diphosphatase from Chlorobaculum tepidum (strain ATCC 49652 / DSM 12025 / NBRC 103806 / TLS) (Chlorobium tepidum).